The primary structure comprises 357 residues: Ribosomal RNA large subunit methyltransferase M (357 aa).

Residues serine 183, 216–219 (APGG), aspartate 235, aspartate 255, and aspartate 271 each bind S-adenosyl-L-methionine. Lysine 300 functions as the Proton acceptor in the catalytic mechanism.

Belongs to the class I-like SAM-binding methyltransferase superfamily. RNA methyltransferase RlmE family. RlmM subfamily. As to quaternary structure, monomer.

It is found in the cytoplasm. The catalysed reaction is cytidine(2498) in 23S rRNA + S-adenosyl-L-methionine = 2'-O-methylcytidine(2498) in 23S rRNA + S-adenosyl-L-homocysteine + H(+). Catalyzes the 2'-O-methylation at nucleotide C2498 in 23S rRNA. The sequence is that of Ribosomal RNA large subunit methyltransferase M from Pseudomonas fluorescens (strain ATCC BAA-477 / NRRL B-23932 / Pf-5).